Consider the following 205-residue polypeptide: Protein Nef (205 aa).

The N-myristoyl glycine; by host moiety is linked to residue Gly2. Ser6 carries the post-translational modification Phosphoserine; by host. The interval 62 to 65 (DNEE) is acidic; interacts with host PACS1 and PACS2; stabilizes the interaction of NEF/MHC-I with host AP1M1; necessary for MHC-I internalization. The tract at residues 69–78 (PVRPQVPTRP) is SH3-binding; interaction with Src family tyrosine kinases. A PxxP; stabilizes the interaction of NEF/MHC-I with host AP1M1; necessary for MHC-I internalization motif is present at residues 72–75 (PQVP). Residues 108–124 (EILDLWVYHTQGFFPDW) are mediates dimerization, Nef-PTE1 interaction. The segment at 148-180 (LTEEQVEQANEGDNNCLLHPICQHGMEDEDKEV) is binding to ATP6V1H. The Dileucine internalization motif; necessary for CD4 internalization signature appears at 164–165 (LL). Positions 174-175 (ED) match the Diacidic; necessary for CD4 internalization motif.

This sequence belongs to the lentivirus primate group Nef protein family. In terms of assembly, monomer; cytosolic form. Homodimer; membrane bound form. Interacts with Nef associated p21-activated kinase (PAK2); this interaction activates PAK2. Associates with the Nef-MHC-I-AP1 complex; this complex is required for MHC-I internalization. Interacts (via C-terminus) with host PI3-kinase. Interacts with host PACS1; this interaction seems to be weak. Interacts with host PACS2. Interacts with host LCK and MAPK3; these interactions inhibit the kinase activity of the latter. Interacts with host ATP6V1H; this interaction may play a role in CD4 endocytosis. Associates with the CD4-Nef-AP2 complex; this complex is required for CD4 internalization. Interacts with host AP2 subunit alpha and AP2 subunit sigma2. Interacts with TCR-zeta chain; this interaction up-regulates the Fas ligand (FasL) surface expression. Interacts with host HCK, LYN, and SRC; these interactions activate the Src family kinases. Interacts with MAP3K5; this interaction inhibits the Fas and TNFR-mediated death signals. Interacts with beta-COP and PTE1. Interacts with human RACK1; this increases Nef phosphorylation by PKC. Interacts with TP53; this interaction decreases the half-life of TP53, protecting the infected cell against p53-mediated apoptosis. In terms of processing, the virion-associated Nef proteins are cleaved by the viral protease to release the soluble C-terminal core protein. Nef is probably cleaved concomitantly with viral structural proteins on maturation of virus particles. Post-translationally, myristoylated. Phosphorylated on serine residues, probably by host PKCdelta and theta.

It localises to the host cell membrane. The protein localises to the virion. Its subcellular location is the secreted. It is found in the host Golgi apparatus membrane. In terms of biological role, factor of infectivity and pathogenicity, required for optimal virus replication. Alters numerous pathways of T-lymphocyte function and down-regulates immunity surface molecules in order to evade host defense and increase viral infectivity. Alters the functionality of other immunity cells, like dendritic cells, monocytes/macrophages and NK cells. In infected CD4(+) T-lymphocytes, down-regulates the surface MHC-I, mature MHC-II, CD4, CD28, CCR5 and CXCR4 molecules. Mediates internalization and degradation of host CD4 through the interaction of with the cytoplasmic tail of CD4, the recruitment of AP-2 (clathrin adapter protein complex 2), internalization through clathrin coated pits, and subsequent transport to endosomes and lysosomes for degradation. Diverts host MHC-I molecules to the trans-Golgi network-associated endosomal compartments by an endocytic pathway to finally target them for degradation. MHC-I down-regulation may involve AP-1 (clathrin adapter protein complex 1) or possibly Src family kinase-ZAP70/Syk-PI3K cascade recruited by PACS2. In consequence infected cells are masked for immune recognition by cytotoxic T-lymphocytes. Decreasing the number of immune receptors also prevents reinfection by more HIV particles (superinfection). Down-regulates host SERINC3 and SERINC5 thereby excluding these proteins from the viral particles. Virion infectivity is drastically higher when SERINC3 or SERINC5 are excluded from the viral envelope, because these host antiviral proteins impair the membrane fusion event necessary for subsequent virion penetration. Its function is as follows. Bypasses host T-cell signaling by inducing a transcriptional program nearly identical to that of anti-CD3 cell activation. Interaction with TCR-zeta chain up-regulates the Fas ligand (FasL). Increasing surface FasL molecules and decreasing surface MHC-I molecules on infected CD4(+) cells send attacking cytotoxic CD8+ T-lymphocytes into apoptosis. Functionally, plays a role in optimizing the host cell environment for viral replication without causing cell death by apoptosis. Protects the infected cells from apoptosis in order to keep them alive until the next virus generation is ready to strike. Inhibits the Fas and TNFR-mediated death signals by blocking MAP3K5/ASK1. Decreases the half-life of TP53, protecting the infected cell against p53-mediated apoptosis. Inhibits the apoptotic signals regulated by the Bcl-2 family proteins through the formation of a Nef/PI3-kinase/PAK2 complex that leads to activation of PAK2 and induces phosphorylation of host BAD. In terms of biological role, extracellular Nef protein targets CD4(+) T-lymphocytes for apoptosis by interacting with CXCR4 surface receptors. The chain is Protein Nef from Simian immunodeficiency virus (isolate CPZ GAB1) (SIV-cpz).